A 387-amino-acid polypeptide reads, in one-letter code: MNRSAALSILKRQSSTAASSSLKRTPLYDLHLKEGATIVPFAGFSMPVQYKGQTISASHKWTREHSGLFDVSHMVQWFVRGENATAYLESITPSSLKELKPFHSTLSAFTNETGGIIDDTIISKQDENTYYIVTNAACSEKDEANLKKHIENWKGVELERVQGRALIAIQGPETASVVQKLIPNVDFSVLKFGQSAYVDFKGVKCLFSRSGYTGEDGFEVSIPEEVSVDFASTLLADTRVRPIGLGARDTLRLEAGMCLYGSDIDDTTSPVEGSLSWIIGKRRRKEGGFVGSSRILKELKDGPSRRRVGFIVEKVPARHGSAVEVDGVEVGQVTSGCPSPTLGKNIAMGYISTGLHQVGTPAHIKVRNKLHPAQVVRMPFVETHYYK.

Glutamate 219, arginine 248, and tyrosine 385 together coordinate substrate.

It belongs to the GcvT family. The glycine cleavage system is composed of four proteins: P, T, L and H.

The protein resides in the mitochondrion. It catalyses the reaction N(6)-[(R)-S(8)-aminomethyldihydrolipoyl]-L-lysyl-[protein] + (6S)-5,6,7,8-tetrahydrofolate = N(6)-[(R)-dihydrolipoyl]-L-lysyl-[protein] + (6R)-5,10-methylene-5,6,7,8-tetrahydrofolate + NH4(+). The glycine cleavage system catalyzes the degradation of glycine. In Schizosaccharomyces pombe (strain 972 / ATCC 24843) (Fission yeast), this protein is Probable aminomethyltransferase, mitochondrial (gcv1).